The chain runs to 114 residues: Ribosome-binding factor A (114 aa).

It belongs to the RbfA family. Monomer. Binds 30S ribosomal subunits, but not 50S ribosomal subunits or 70S ribosomes.

It is found in the cytoplasm. One of several proteins that assist in the late maturation steps of the functional core of the 30S ribosomal subunit. Associates with free 30S ribosomal subunits (but not with 30S subunits that are part of 70S ribosomes or polysomes). Required for efficient processing of 16S rRNA. May interact with the 5'-terminal helix region of 16S rRNA. The protein is Ribosome-binding factor A of Macrococcus caseolyticus (strain JCSC5402) (Macrococcoides caseolyticum).